Consider the following 503-residue polypeptide: Maturase K (503 aa).

It belongs to the intron maturase 2 family. MatK subfamily.

The protein localises to the plastid. The protein resides in the chloroplast. Usually encoded in the trnK tRNA gene intron. Probably assists in splicing its own and other chloroplast group II introns. The protein is Maturase K of Thryptomene saxicola (Rock thryptomene).